The sequence spans 357 residues: bZIP transcription factor 23 (357 aa).

The disordered stretch occupies residues 166–185 (PPVPPAPTPTAAAVPPPPPP). A bZIP domain is found at 275 to 338 (VERRQRRMIK…KNEVLERMSR (64 aa)). Residues 277 to 296 (RRQRRMIKNRESAARSRQRK) form a basic motif region. The tract at residues 303–317 (LEAEVAKLKELNDEL) is leucine-zipper.

Belongs to the bZIP family. ABI5 subfamily. As to expression, highly expressed in leaves.

The protein localises to the nucleus. In terms of biological role, transcriptional activator that mediates abscisic acid (ABA) signaling. Can regulate the expression of a wide spectrum of stress-related genes in response to abiotic stresses through an ABA-dependent regulation pathway. Confers ABA-dependent drought and salinity tolerance. Binds specifically to the ABA-responsive elements (ABRE) in the promoter of target genes to mediate stress-responsive ABA signaling. The protein is bZIP transcription factor 23 of Oryza sativa subsp. japonica (Rice).